Reading from the N-terminus, the 142-residue chain is MAKKVQAYVKLQVAAGMANPSPPVGPALGQQGVNIMEFCKAFNAKTESIEKGLPIPVVITVYSDRSFTFVTKTPPAAVLLKKAAGIKSGSGVPNKDKVGKVTSAQVREIAETKAADMTGSDVDAMMRSIEGTAHSMGLVVEG.

It belongs to the universal ribosomal protein uL11 family. As to quaternary structure, part of the ribosomal stalk of the 50S ribosomal subunit. Interacts with L10 and the large rRNA to form the base of the stalk. L10 forms an elongated spine to which L12 dimers bind in a sequential fashion forming a multimeric L10(L12)X complex. In terms of processing, one or more lysine residues are methylated.

Its function is as follows. Forms part of the ribosomal stalk which helps the ribosome interact with GTP-bound translation factors. The protein is Large ribosomal subunit protein uL11 of Yersinia pseudotuberculosis serotype O:1b (strain IP 31758).